The following is a 352-amino-acid chain: N-acetyl-gamma-glutamyl-phosphate reductase (352 aa).

Cysteine 151 is a catalytic residue.

It belongs to the NAGSA dehydrogenase family. Type 1 subfamily.

It localises to the cytoplasm. It catalyses the reaction N-acetyl-L-glutamate 5-semialdehyde + phosphate + NADP(+) = N-acetyl-L-glutamyl 5-phosphate + NADPH + H(+). The protein operates within amino-acid biosynthesis; L-arginine biosynthesis; N(2)-acetyl-L-ornithine from L-glutamate: step 3/4. Its function is as follows. Catalyzes the NADPH-dependent reduction of N-acetyl-5-glutamyl phosphate to yield N-acetyl-L-glutamate 5-semialdehyde. This is N-acetyl-gamma-glutamyl-phosphate reductase from Renibacterium salmoninarum (strain ATCC 33209 / DSM 20767 / JCM 11484 / NBRC 15589 / NCIMB 2235).